We begin with the raw amino-acid sequence, 352 residues long: Protein TIFY 6B (352 aa).

The segment at 1-71 is disordered; the sequence is MERDFLGLGS…KSGNYHLPHS (71 aa). The segment covering 17–26 has biased composition (basic and acidic residues); it reads VKEETSESSR. The segment covering 34–54 has biased composition (polar residues); the sequence is MNWSFSNKVSASSSQFLSFRP. Residues 172–207 enclose the Tify domain; it reads PIGSPAQLTIFYAGSVCVYDDISPEKAKAIMLLAGN. Positions 302-326 match the Jas motif; sequence PLARKASLARFLEKRKERVTSVSPY. Positions 304–311 match the Nuclear localization signal motif; sequence ARKASLAR.

It belongs to the TIFY/JAZ family. As to quaternary structure, homo- and heterodimer. Interacts with COI1, MYC2, MYC3, MYC4, TIFY10A/JAZ1, TIFY10B/JAZ2, TIFY6A/JAZ4, TIFY5A/JAZ8, TIFY7/JAZ9, TIFY9/JAZ10 and TIFY3A/JAZ11. Interacts (via TIFY domain) with AFPH2/NINJA. Post-translationally, ubiquitinated. Targeted for degradation by the SCF(COI1) E3 ubiquitin ligase-proteasome pathway during jasmonate signaling. As to expression, srtongly expressed in root tips.

The protein resides in the nucleus. Functionally, repressor of jasmonate responses. Jasmonoyl-isoleucine (JA-Ile) specifically promotes COI1-TIFY6B/JAZ3 interaction. Acts as a negative regulator of MYC2 function. Feed-back regulated by MYC2. The chain is Protein TIFY 6B (TIFY6B) from Arabidopsis thaliana (Mouse-ear cress).